Reading from the N-terminus, the 143-residue chain is Fluoride-specific ion channel FluC (143 aa).

4 helical membrane-spanning segments follow: residues 6-26 (CILV…VSVL), 38-58 (TILI…LTLA), 70-90 (LFVM…SLQT), and 103-123 (MVNV…GHVV). 2 residues coordinate Na(+): Gly78 and Thr81.

The protein belongs to the fluoride channel Fluc/FEX (TC 1.A.43) family.

Its subcellular location is the cell inner membrane. The enzyme catalyses fluoride(in) = fluoride(out). With respect to regulation, na(+) is not transported, but it plays an essential structural role and its presence is essential for fluoride channel function. Functionally, fluoride-specific ion channel. Important for reducing fluoride concentration in the cell, thus reducing its toxicity. This is Fluoride-specific ion channel FluC from Methylobacterium radiotolerans (strain ATCC 27329 / DSM 1819 / JCM 2831 / NBRC 15690 / NCIMB 10815 / 0-1).